The sequence spans 176 residues: MAPKAVLVGLPGSGKSTIGRRLAKALGVGLLDTDVAIEQRTGRSIADIFATDGEQEFRRIEEDVVRAALADHDGVLSLGGGAVTSPGVRAALAGHTVVYLEISAAEGVRRTGGNTVRPLLAGPDRAEKYRALMAKRAPLYRRVATMRVDTNRRNPGAVVRHILSRLQVPSPSEAAT.

12–17 (GSGKST) provides a ligand contact to ATP. Serine 16 contributes to the Mg(2+) binding site. Substrate is bound by residues aspartate 34, arginine 58, and glycine 80. Arginine 117 is an ATP binding site. A substrate-binding site is contributed by arginine 136. Arginine 153 lines the ATP pocket.

This sequence belongs to the shikimate kinase family. As to quaternary structure, monomer. It depends on Mg(2+) as a cofactor.

The protein localises to the cytoplasm. It carries out the reaction shikimate + ATP = 3-phosphoshikimate + ADP + H(+). It functions in the pathway metabolic intermediate biosynthesis; chorismate biosynthesis; chorismate from D-erythrose 4-phosphate and phosphoenolpyruvate: step 5/7. Catalyzes the specific phosphorylation of the 3-hydroxyl group of shikimic acid using ATP as a cosubstrate. This chain is Shikimate kinase, found in Mycobacterium bovis (strain ATCC BAA-935 / AF2122/97).